We begin with the raw amino-acid sequence, 183 residues long: Capsid protein (183 aa).

The interval 136 to 183 (NAPILSTLPETTVVRRRGRSPRRRTPSPRRRRSQSPRRRRSQSRESQC) is disordered. Positions 149–176 (VRRRGRSPRRRTPSPRRRRSQSPRRRRS) are enriched in basic residues. Phosphoserine; by host is present on residues Ser155, Ser162, and Ser170. A 1; half-length repeat occupies 155–161 (SPRRRTP). The tract at residues 155 to 177 (SPRRRTPSPRRRRSQSPRRRRSQ) is 3 X 8 AA repeats of S-P-R-R-R-[PR]-S-Q. Residues 158 to 175 (RRTPSPRRRRSQSPRRRR) carry the Bipartite nuclear localization signal motif. Repeat copies occupy residues 162–169 (SPRRRRSQ) and 170–177 (SPRRRRSQ). The interval 177–183 (QSRESQC) is RNA binding.

The protein belongs to the orthohepadnavirus core antigen family. As to quaternary structure, homodimerizes, then multimerizes. Interacts with cytosol exposed regions of viral L glycoprotein present in the reticulum-to-Golgi compartment. Interacts with human FLNB. Phosphorylated form interacts with host importin alpha; this interaction depends on the exposure of the NLS, which itself depends upon genome maturation and/or phosphorylation of the capsid protein. Interacts with host NUP153. In terms of processing, phosphorylated by host SRPK1, SRPK2, and maybe protein kinase C or GAPDH. Phosphorylation is critical for pregenomic RNA packaging. Protein kinase C phosphorylation is stimulated by HBx protein and may play a role in transport of the viral genome to the nucleus at the late step during the viral replication cycle.

It is found in the virion. It localises to the host cytoplasm. Its function is as follows. Self assembles to form an icosahedral capsid. Most capsids appear to be large particles with an icosahedral symmetry of T=4 and consist of 240 copies of capsid protein, though a fraction forms smaller T=3 particles consisting of 180 capsid proteins. Entering capsids are transported along microtubules to the nucleus. Phosphorylation of the capsid is thought to induce exposure of nuclear localization signal in the C-terminal portion of the capsid protein that allows binding to the nuclear pore complex via the importin (karyopherin-) alpha and beta. Capsids are imported in intact form through the nuclear pore into the nuclear basket, where it probably binds NUP153. Only capsids that contain the mature viral genome can release the viral DNA and capsid protein into the nucleoplasm. Immature capsids get stuck in the basket. Capsids encapsulate the pre-genomic RNA and the P protein. Pre-genomic RNA is reverse-transcribed into DNA while the capsid is still in the cytoplasm. The capsid can then either be directed to the nucleus, providing more genomes for transcription, or bud through the endoplasmic reticulum to provide new virions. This is Capsid protein from Hepatitis B virus genotype D subtype ayw (isolate Italy/CI/1992) (HBV-D).